A 372-amino-acid polypeptide reads, in one-letter code: Tetraacyldisaccharide 4'-kinase (372 aa).

65–72 contacts ATP; that stretch reads TVGGTGKT. Residues 351 to 372 form a disordered region; the sequence is QSTATGMADGLDKEHQDGQPAA. The span at 360 to 372 shows a compositional bias: basic and acidic residues; it reads GLDKEHQDGQPAA.

The protein belongs to the LpxK family.

It carries out the reaction a lipid A disaccharide + ATP = a lipid IVA + ADP + H(+). It participates in glycolipid biosynthesis; lipid IV(A) biosynthesis; lipid IV(A) from (3R)-3-hydroxytetradecanoyl-[acyl-carrier-protein] and UDP-N-acetyl-alpha-D-glucosamine: step 6/6. Its function is as follows. Transfers the gamma-phosphate of ATP to the 4'-position of a tetraacyldisaccharide 1-phosphate intermediate (termed DS-1-P) to form tetraacyldisaccharide 1,4'-bis-phosphate (lipid IVA). This is Tetraacyldisaccharide 4'-kinase from Cupriavidus metallidurans (strain ATCC 43123 / DSM 2839 / NBRC 102507 / CH34) (Ralstonia metallidurans).